Consider the following 594-residue polypeptide: Serine/threonine-protein kinase UL13 homolog (594 aa).

Disordered regions lie at residues 1–105 (MARS…TSQC) and 128–183 (ECDA…VGGR). The segment covering 38-47 (RPKKSTRGRS) has biased composition (basic residues). In terms of domain architecture, Protein kinase spans 223 to 594 (GEIPKFGGAG…SIPLLWTPRP (372 aa)). ATP is bound by residues 229 to 237 (GGAGSYGEV) and K248. D349 acts as the Proton acceptor in catalysis.

This sequence belongs to the protein kinase superfamily. Ser/Thr protein kinase family. In terms of processing, autophosphorylated.

Its subcellular location is the virion tegument. The protein localises to the host nucleus. It carries out the reaction L-seryl-[protein] + ATP = O-phospho-L-seryl-[protein] + ADP + H(+). The enzyme catalyses L-threonyl-[protein] + ATP = O-phospho-L-threonyl-[protein] + ADP + H(+). Multifunctional serine/threonine kinase that plays a role in several processes including egress of virus particles from the nucleus, modulation of the actin cytoskeleton and regulation of viral and cellular gene expression. Regulates the nuclear localization of viral envelopment factors UL34 and UL31 homologs, by phosphorylating the US3 kinase homolog, indicating a role in nuclear egress. Disrupts host nuclear lamins, including LMNA and LMNB1. Phosphorylates the viral Fc receptor composed of glycoproteins E (gE) and I (gI). Phosphorylation of glycoprotein E (gE) by UL13 homolog alters its subcellular localization, from the host early endosome to the plasma membrane. Participates in the transcriptional regulation of cellular and viral mRNAs mainly by phosphorylating the viral transcriptional regulator ICP22 homolog. The chain is Serine/threonine-protein kinase UL13 homolog from Equus caballus (Horse).